A 160-amino-acid chain; its full sequence is Major pollen allergen Cor a 1 isoforms 5, 6, 11 and 16 (160 aa).

It belongs to the BetVI family.

The sequence is that of Major pollen allergen Cor a 1 isoforms 5, 6, 11 and 16 from Corylus avellana (European hazel).